The sequence spans 300 residues: Cell shape-determining protein MreC (300 aa).

At 1-17 (MARDRTRPEDFTRPLRR) the chain is on the cytoplasmic side. The chain crosses the membrane as a helical span at residues 18-38 (ILVGGLVLLLLGIFLIWRIDS). Topologically, residues 39 to 300 (PRVEQFRAAL…APAAVEGADG (262 aa)) are periplasmic. The stretch at 74–117 (QSYTRIYEQNQELRRELQQMKAWKEAALQLEQKNARLLDLNQVR) forms a coiled coil. The interval 277–300 (SDPGKLVAEPPAPPAPAAVEGADG) is disordered.

This sequence belongs to the MreC family.

Its subcellular location is the cell inner membrane. Functionally, involved in formation and maintenance of cell shape. In Cereibacter sphaeroides (Rhodobacter sphaeroides), this protein is Cell shape-determining protein MreC.